The primary structure comprises 1001 residues: TonB-dependent receptor P3 (1001 aa).

Residues 1–26 form the signal peptide; it reads MTTKNNKQLKSVLFMFLLLIGAYVKA. The short motif at 109 to 116 is the TonB box element; it reads EEIVVIGY. The TBDR plug domain maps to 120–232; sequence KKSDVSGSVS…ANGVIMVTTK (113 aa). In terms of domain architecture, TBDR beta-barrel spans 238-1001; it reads KPTLELNTSY…TFTMGLNMKF (764 aa). Residues 984–1001 carry the TonB C-terminal box motif; that stretch reads YGSYPNVRTFTMGLNMKF.

It belongs to the TonB-dependent receptor family.

Its subcellular location is the cell outer membrane. TonB-dependent receptor probably involved in ulvan degradation. Ulvan is the main polysaccharide component of the Ulvales (green seaweed) cell wall. It is composed of disaccharide building blocks comprising 3-sulfated rhamnose (Rha3S) linked to D-glucuronic acid (GlcA), L-iduronic acid (IduA), or D-xylose (Xyl). The TonB-dependent receptor may mediate transport of ulvan oligosaccharides from the surface of the outer membrane to the periplasm for subsequent degradation. This Formosa agariphila (strain DSM 15362 / KCTC 12365 / LMG 23005 / KMM 3901 / M-2Alg 35-1) protein is TonB-dependent receptor P3.